A 301-amino-acid chain; its full sequence is Protoheme IX farnesyltransferase (301 aa).

The next 9 helical transmembrane spans lie at 29–49 (VVALMLLTVLVGMCLALPGAV), 51–71 (LQPLVFGMLGIAMMAGSAAAF), 101–121 (AFSFAFSLGVLGFVLLYWWVN), 123–143 (LTAWLTFASLIGYAVVYTAYL), 150–170 (NIVIGGLAGAMPPLLGWTAVT), 177–197 (ALLLVIIIFTWTPPHFWALAI), 223–243 (CILLYTFLLALACLLPVLVGM), 244–264 (SGPVYLVGSSILSCGFIYKAW), and 281–301 (FSIYHLMLLFVVLLVDHYLWG).

This sequence belongs to the UbiA prenyltransferase family. Protoheme IX farnesyltransferase subfamily.

It localises to the cell inner membrane. The catalysed reaction is heme b + (2E,6E)-farnesyl diphosphate + H2O = Fe(II)-heme o + diphosphate. It functions in the pathway porphyrin-containing compound metabolism; heme O biosynthesis; heme O from protoheme: step 1/1. In terms of biological role, converts heme B (protoheme IX) to heme O by substitution of the vinyl group on carbon 2 of heme B porphyrin ring with a hydroxyethyl farnesyl side group. This is Protoheme IX farnesyltransferase from Shewanella denitrificans (strain OS217 / ATCC BAA-1090 / DSM 15013).